A 397-amino-acid polypeptide reads, in one-letter code: MNYAYPDEKGHYGIYGGRYVPETLMQSVLELEEAYKEAMEDEAFQKELNHYLKTYVGRETPLYFAENMTEYCGGAKIYLKREDLNHTGAHKINNTIGQALLAVRMGKKKVVAETGAGQHGVATATVCALLGLECVIFMGEEDVRRQKLNVFRMELLGAKVESVAAGSGTLKDAVNEALRYWVSHVHDTHYIMGSVLGPHPFPQIVRDFQSVIGNETKKQYEALEGKLPEAVVACIGGGSNAMGMFYPFVHDEEVALYGVEAAGKGVHTEKHAATLTKGSVGVLHGSMMYLLQNEEGQIQEAHSISAGLDYPGVGPEHSLLKDIGRVSYHSITDDEALEAFQLLTKKEGIIPALESSHAVAYALKLAPQMKEDEGLVICLSGRGDKDVESIKRYMEEV.

Position 91 is an N6-(pyridoxal phosphate)lysine (Lys-91).

This sequence belongs to the TrpB family. Tetramer of two alpha and two beta chains. It depends on pyridoxal 5'-phosphate as a cofactor.

The catalysed reaction is (1S,2R)-1-C-(indol-3-yl)glycerol 3-phosphate + L-serine = D-glyceraldehyde 3-phosphate + L-tryptophan + H2O. Its pathway is amino-acid biosynthesis; L-tryptophan biosynthesis; L-tryptophan from chorismate: step 5/5. Functionally, the beta subunit is responsible for the synthesis of L-tryptophan from indole and L-serine. In Bacillus anthracis (strain A0248), this protein is Tryptophan synthase beta chain.